Consider the following 294-residue polypeptide: Cytidine deaminase (294 aa).

CMP/dCMP-type deaminase domains lie at 48-168 (DEDA…FGPK) and 186-294 (LTGD…VLLG). 89–91 (NME) contributes to the substrate binding site. Residue His102 participates in Zn(2+) binding. Glu104 (proton donor) is an active-site residue. Cys129 and Cys132 together coordinate Zn(2+).

This sequence belongs to the cytidine and deoxycytidylate deaminase family. In terms of assembly, homodimer. Requires Zn(2+) as cofactor.

It carries out the reaction cytidine + H2O + H(+) = uridine + NH4(+). It catalyses the reaction 2'-deoxycytidine + H2O + H(+) = 2'-deoxyuridine + NH4(+). This enzyme scavenges exogenous and endogenous cytidine and 2'-deoxycytidine for UMP synthesis. The sequence is that of Cytidine deaminase from Salmonella agona (strain SL483).